The primary structure comprises 185 residues: Stathmin-4 (185 aa).

Residues 48 to 185 (SDMEVIELNK…EVRKNKEATR (138 aa)) enclose the SLD domain. Residues 90–185 (SLEEIQKKLE…EVRKNKEATR (96 aa)) adopt a coiled-coil conformation. A disordered region spans residues 165-185 (ERLQEKDKHAEEVRKNKEATR). Positions 166–185 (RLQEKDKHAEEVRKNKEATR) are enriched in basic and acidic residues.

The protein belongs to the stathmin family. Nervous tissue.

The sequence is that of Stathmin-4 (stmn4) from Xenopus laevis (African clawed frog).